The primary structure comprises 293 residues: ATP synthase gamma chain (293 aa).

This sequence belongs to the ATPase gamma chain family. As to quaternary structure, F-type ATPases have 2 components, CF(1) - the catalytic core - and CF(0) - the membrane proton channel. CF(1) has five subunits: alpha(3), beta(3), gamma(1), delta(1), epsilon(1). CF(0) has three main subunits: a, b and c.

It is found in the cell inner membrane. Produces ATP from ADP in the presence of a proton gradient across the membrane. The gamma chain is believed to be important in regulating ATPase activity and the flow of protons through the CF(0) complex. The protein is ATP synthase gamma chain of Nitratidesulfovibrio vulgaris (strain DSM 19637 / Miyazaki F) (Desulfovibrio vulgaris).